A 117-amino-acid polypeptide reads, in one-letter code: MGSVKSAGLSLLLLSFLLYVADSYPNTDLSNMGCEACTLRKNTVFSRDRPIYQCMGCCFSRAYPTPLKAMKTMTIPKNITSEATCCVAKHVYETEVAGIRVRNHTDCHCSTCYYHKI.

The signal sequence occupies residues 1-23 (MGSVKSAGLSLLLLSFLLYVADS). Disulfide bonds link C34/C57, C37/C86, C54/C107, C58/C109, and C85/C112. N-linked (GlcNAc...) asparagine glycans are attached at residues N78 and N103.

Belongs to the glycoprotein hormones subunit alpha family. In terms of assembly, heterodimer. Glycoprotein hormones are heterodimers composed of a common alpha chain described here and a unique beta chain which confers their biological specificity to the different hormones.

The protein localises to the secreted. Shared alpha chain of heterodimeric glycoprotein hormones. These hormones bind specific receptors on target cells that in turn activate downstream signaling pathways. Involved in gametogenesis and steroidogenesis. The protein is Glycoprotein hormones alpha chain (cga) of Acanthopagrus latus (Yellowfin seabream).